We begin with the raw amino-acid sequence, 1548 residues long: Nuclear factor of activated T-cells 5 (1548 aa).

The segment at 54-106 (QLPPPRETSAASMSQTSGGEAGSPPPAVVAADASSAPSSSMGGACSSFTTSSS) is disordered. Residues 81-106 (VVAADASSAPSSSMGGACSSFTTSSS) show a composition bias toward low complexity. Ser-137 carries the phosphoserine modification. Lys-139 bears the N6-acetyllysine mark. The segment covering 141 to 151 (LTGNTVQQHPS) has biased composition (polar residues). Disordered regions lie at residues 141 to 180 (LTGNTVQQHPSTPKRHTVLYISPPPEDLLDNSRMSCQDEG), 192 to 237 (WMED…CEES), and 258 to 282 (TTDNKGNSKAGNGTLDSQKGTGVKK). Ser-151 carries the phosphoserine modification. Thr-152 carries the phosphothreonine; by CDK5 modification. Ser-172 bears the Phosphoserine mark. Low complexity predominate over residues 196 to 209 (SPSNFSNMSTSSYN). Residues 217 to 229 (KSRKRNPKQRPGV) show a composition bias toward basic residues. Polar residues predominate over residues 258-277 (TTDNKGNSKAGNGTLDSQKG). Residues 281–460 (KKSPMLCGQY…SPILCTQPAG (180 aa)) form the RHD domain. Residues 310–317 (RARYLTEG) mediate DNA binding. A Glycyl lysine isopeptide (Lys-Gly) (interchain with G-Cter in SUMO1); alternate cross-link involves residue Lys-572. Lys-572 participates in a covalent cross-link: Glycyl lysine isopeptide (Lys-Gly) (interchain with G-Cter in SUMO2); alternate. A Phosphoserine modification is found at Ser-577. Residue Lys-619 forms a Glycyl lysine isopeptide (Lys-Gly) (interchain with G-Cter in SUMO2) linkage. Disordered regions lie at residues 659 to 682 (GNASFSSPSSSHLSPENENQQQLQ), 750 to 777 (TEAPQQQQSPLQEQAQIPSNIFPSPNSV), 851 to 892 (PGMF…QQQQ), 970 to 1010 (SPPA…GAQA), 1097 to 1127 (LSQETQGPMFHSANPIVHSQTSTASSEQLQP), and 1257 to 1388 (MQSN…QEQQ). 2 stretches are compositionally biased toward low complexity: residues 662 to 672 (SFSSPSSSHLS) and 751 to 765 (EAPQQQQSPLQEQAQ). Polar residues-rich tracts occupy residues 766–777 (IPSNIFPSPNSV), 851–860 (PGMFSSTESA), and 876–886 (VHQQTENTLSS). Residues 979–993 (TSTTTTPQVATPGST) are compositionally biased toward low complexity. Over residues 1113-1127 (VHSQTSTASSEQLQP) the composition is skewed to polar residues. The segment covering 1264–1283 (QEQQQQQQQQQQQQQQQQQQ) has biased composition (low complexity). Composition is skewed to polar residues over residues 1284–1300 (SILFSNQNAMATMASQK) and 1308–1333 (FSPNQNPMASQEQQNQSIFHQQSNMA). A compositionally biased stretch (low complexity) spans 1334 to 1348 (PMNQEQQPMQFQNQP). Residues 1349 to 1388 (TVSSLQNPGPTPSESPQTSLFHSSPQIQLVQGSPSSQEQQ) are compositionally biased toward polar residues.

Homodimer when bound to DNA, completely encircles its DNA target. Interacts with CIDEC; this interaction is direct and retains NFAT5 in the cytoplasm. Does not bind with Fos and Jun transcription factors. Interacts with DDX5 and DDX17; this interaction leads to DDX5/DDX17 recruitment to LNC2 and S100A4 promoters and NFAT5-mediated DDX5/DDX17-enhanced transactivation. In terms of processing, phosphorylated. Phosphorylated at Thr-152 by CDK5 in response to osmotic stress; this phosphorylation mediates its rapid nuclear localization. Poly-ADP-ribosylated by PARP1 in response to DNA damage, promoting recruitment to sites of R-loop-associated DNA damage.

The protein resides in the nucleus. The protein localises to the cytoplasm. It is found in the chromosome. Functionally, transcription factor involved, among others, in the transcriptional regulation of osmoprotective and inflammatory genes. Binds the DNA consensus sequence 5'-[ACT][AG]TGGAAA[CAT]A[TA][ATC][CA][ATG][GT][GAC][CG][CT]-3'. Mediates the transcriptional response to hypertonicity. Positively regulates the transcription of LCN2 and S100A4 genes; optimal transactivation of these genes requires the presence of DDX5/DDX17. Also involved in the DNA damage response by preventing formation of R-loops; R-loops are composed of a DNA:RNA hybrid and the associated non-template single-stranded DNA. This Rattus norvegicus (Rat) protein is Nuclear factor of activated T-cells 5 (Nfat5).